A 605-amino-acid chain; its full sequence is Glutamine--fructose-6-phosphate aminotransferase [isomerizing] (605 aa).

C2 (nucleophile; for GATase activity) is an active-site residue. The 215-residue stretch at 2–216 (CGIVGIVGHQ…DGDWAVIGKT (215 aa)) folds into the Glutamine amidotransferase type-2 domain. 2 SIS domains span residues 280–420 (DSDA…ARGT) and 454–595 (LSRE…VDQP). Residue K600 is the For Fru-6P isomerization activity of the active site.

Its subcellular location is the cytoplasm. It catalyses the reaction D-fructose 6-phosphate + L-glutamine = D-glucosamine 6-phosphate + L-glutamate. Its function is as follows. Involved in the production of the root hair deformation (HAD) factor specifically on medicago. The sequence is that of Glutamine--fructose-6-phosphate aminotransferase [isomerizing] (nodM) from Rhizobium meliloti (Ensifer meliloti).